The primary structure comprises 317 residues: EMP1 trafficking protein-7 (317 aa).

A disordered region spans residues 1–32; sequence MAKDSQKNLNVSNNNNVQCTMGRSSQNINKSD. Positions 8 to 17 are enriched in low complexity; it reads NLNVSNNNNV. Positions 18–30 are enriched in polar residues; sequence QCTMGRSSQNINK. Positions 86–90 match the PEXEL motif motif; it reads KSLAE. A helical transmembrane segment spans residues 230–250; sequence VLNALLPFIFIAFVYCTITML. Positions 265–317 are essential for its function; the sequence is KILKMHYDYKHKENNNNNNNNNNNNNNNNNNNNNNNNNNNNNNNNNNKKSKKN. The tract at residues 277 to 317 is disordered; sequence ENNNNNNNNNNNNNNNNNNNNNNNNNNNNNNNNNNKKSKKN. Residues 279–311 show a composition bias toward low complexity; sequence NNNNNNNNNNNNNNNNNNNNNNNNNNNNNNNNN.

In terms of assembly, may interact with MESA. May interact with J-dot compartment protein PF3D7_0801000.

The protein localises to the host cytoplasm. The protein resides in the vesicle. It is found in the membrane. Its function is as follows. During the asexual blood stage, plays an essential role in the recruitment and/or formation of EMP1-containing vesicles at the Maurer's clefts and their subsequent transfer to the host erythrocyte cell membrane. In Plasmodium falciparum (isolate 3D7), this protein is EMP1 trafficking protein-7.